The chain runs to 300 residues: Neutral protease NprE (300 aa).

Asp139 contributes to the Ca(2+) binding site. His143 serves as a coordination point for Zn(2+). Glu144 is an active-site residue. His147 and Glu167 together coordinate Zn(2+). Positions 178, 181, 183, and 186 each coordinate Ca(2+). The active-site Proton donor is the His228.

Belongs to the peptidase M4 family. Ca(2+) serves as cofactor. Requires Zn(2+) as cofactor.

It localises to the secreted. The catalysed reaction is Similar, but not identical, to that of thermolysin.. In terms of biological role, extracellular zinc metalloprotease. In Bacillus pumilus (Bacillus mesentericus), this protein is Neutral protease NprE (nprE).